A 437-amino-acid chain; its full sequence is Vacuolar protein sorting-associated protein 4A (437 aa).

The interval 1–84 (MTTSTLQKAI…RSKEKHGKKP (84 aa)) is interaction with CHMP1B. An MIT domain is found at 2–80 (TTSTLQKAID…KDYLRSKEKH (79 aa)). Position 8 is an N6-acetyllysine (lysine 8). The disordered stretch occupies residues 75 to 106 (RSKEKHGKKPVKENQSEGKGSDSDSEGDNPEK). Positions 84–96 (PVKENQSEGKGSD) are enriched in basic and acidic residues. A phosphoserine mark is found at serine 95 and serine 97. 167 to 174 (GPPGTGKS) contributes to the ATP binding site.

Belongs to the AAA ATPase family. Proposed to be monomeric or homodimeric in nucleotide-free form and to oligomerize upon binding to ATP to form two stacked hexameric or heptameric rings with a central pore through which ESCRT-III substrates are translocated in an ATP-dependent manner. Interacts with CHMP1A, CHMP1B, CHMP2A, CHMP2B, CHMP3, CHMP4A, CHMP4B, CHMP4C and CHMP6. Interacts with VPS4B; the interaction suggests a heteromeric assembly with VPS4B. Interacts with SPAST. Interacts with IST1. Interacts with ZFYVE19/ANCHR; leading to retain it at midbody. As to expression, ubiquitously expressed.

It is found in the late endosome membrane. The protein localises to the midbody. Its subcellular location is the cytoplasm. The protein resides in the cytoskeleton. It localises to the spindle. The catalysed reaction is ATP + H2O = ADP + phosphate + H(+). In terms of biological role, involved in late steps of the endosomal multivesicular bodies (MVB) pathway. Recognizes membrane-associated ESCRT-III assemblies and catalyzes their disassembly, possibly in combination with membrane fission. Redistributes the ESCRT-III components to the cytoplasm for further rounds of MVB sorting. MVBs contain intraluminal vesicles (ILVs) that are generated by invagination and scission from the limiting membrane of the endosome and mostly are delivered to lysosomes enabling degradation of membrane proteins, such as stimulated growth factor receptors, lysosomal enzymes and lipids. It is required for proper accomplishment of various processes including the regulation of endosome size, primary cilium organization, mitotic spindle organization, chromosome segregation, and nuclear envelope sealing and spindle disassembly during anaphase. Involved in cytokinesis: retained at the midbody by ZFYVE19/ANCHR and CHMP4C until abscission checkpoint signaling is terminated at late cytokinesis. It is then released following dephosphorylation of CHMP4C, leading to abscission. VPS4A/B are required for the exosomal release of SDCBP, CD63 and syndecan. Critical for normal erythroblast cytokinesis and correct erythropoiesis. Its function is as follows. (Microbial infection) In conjunction with the ESCRT machinery also appears to function in topologically equivalent membrane fission events, such as the terminal stages of cytokinesis and enveloped virus budding (HIV-1 and other lentiviruses). The sequence is that of Vacuolar protein sorting-associated protein 4A from Homo sapiens (Human).